An 807-amino-acid polypeptide reads, in one-letter code: Glycerol-3-phosphate acyltransferase (807 aa).

An HXXXXD motif motif is present at residues 308 to 313 (CHRSHM).

The protein belongs to the GPAT/DAPAT family.

The protein localises to the cell inner membrane. The enzyme catalyses sn-glycerol 3-phosphate + an acyl-CoA = a 1-acyl-sn-glycero-3-phosphate + CoA. Its pathway is phospholipid metabolism; CDP-diacylglycerol biosynthesis; CDP-diacylglycerol from sn-glycerol 3-phosphate: step 1/3. The sequence is that of Glycerol-3-phosphate acyltransferase from Shewanella frigidimarina (strain NCIMB 400).